The following is a 190-amino-acid chain: Glutamyl-tRNA(Gln) amidotransferase subunit F, mitochondrial (190 aa).

The protein belongs to the GatF family. As to quaternary structure, subunit of the heterotrimeric GatFAB amidotransferase (AdT) complex, composed of A, B and F subunits.

It is found in the mitochondrion inner membrane. It catalyses the reaction L-glutamyl-tRNA(Gln) + L-glutamine + ATP + H2O = L-glutaminyl-tRNA(Gln) + L-glutamate + ADP + phosphate + H(+). In terms of biological role, allows the formation of correctly charged Gln-tRNA(Gln) through the transamidation of misacylated Glu-tRNA(Gln) in the mitochondria. The reaction takes place in the presence of glutamine and ATP through an activated gamma-phospho-Glu-tRNA(Gln). Required for proper protein synthesis within the mitochondrion. The polypeptide is Glutamyl-tRNA(Gln) amidotransferase subunit F, mitochondrial (Eremothecium gossypii (strain ATCC 10895 / CBS 109.51 / FGSC 9923 / NRRL Y-1056) (Yeast)).